We begin with the raw amino-acid sequence, 637 residues long: MGIEYSASSITVLEGLEAVRKRPGMYIGSTGPNGLHHLVYEVVDNCIDEAMAGYCDRITVVLEQGNVVRVEDNGRGIPVDVHPHEGVSALEVVLTKLHAGGKFDKKSYKVSGGLHGVGVSVVNALSLWVEVTVYRDGAEYYQKFNVGMPLAPVEKRGVSEKRGTIIRWQADPSIFKETVAYDFDVLLTRLRELAFLNSTVVIQLRDERLATAKQVEFAFEGGIRHFVSYLNRGKSVVPERPLYIEGSKSDVLVEVALQYHDGYTENVQSFVNDINTREGGTHLEGFKSALTRVANDFLKKSPKLAKKIEREEKLVGEDVRAGLTVVLSVKIPEPQFEGQTKTKLGNSEVRGIVDSLVGERLTLYFEQNPGVLTKILEKSIAEAQARLAARRAKEAARRKSGMDSFGLPGKLADCSLKDPAKCEVYIVEGDSAGGSAKKGRDSKTQAILPLWGKMLNVEKTRLDKVLHNEKLQPIIATLGTGVGKDFDLTRIRYHKVIIMADADVDGSHIRTLLLTFFFRYLPQIIEAGYVYLAMPPLYRIAWSKKELYVYSDTERDEALESIGKKSGVAVQRYKGLGEMDGTQLWETTMNPVRRKMMQVVLSDAVEADRVFSTLMGEDVEPRRKFIEENAIYARLDV.

Positions 422–536 (CEVYIVEGDS…AGYVYLAMPP (115 aa)) constitute a Toprim domain. Positions 428, 501, and 503 each coordinate Mg(2+).

This sequence belongs to the type II topoisomerase GyrB family. In terms of assembly, heterotetramer, composed of two GyrA and two GyrB chains. In the heterotetramer, GyrA contains the active site tyrosine that forms a transient covalent intermediate with DNA, while GyrB binds cofactors and catalyzes ATP hydrolysis. Mg(2+) is required as a cofactor. The cofactor is Mn(2+). It depends on Ca(2+) as a cofactor.

It localises to the cytoplasm. It carries out the reaction ATP-dependent breakage, passage and rejoining of double-stranded DNA.. A type II topoisomerase that negatively supercoils closed circular double-stranded (ds) DNA in an ATP-dependent manner to modulate DNA topology and maintain chromosomes in an underwound state. Negative supercoiling favors strand separation, and DNA replication, transcription, recombination and repair, all of which involve strand separation. Also able to catalyze the interconversion of other topological isomers of dsDNA rings, including catenanes and knotted rings. Type II topoisomerases break and join 2 DNA strands simultaneously in an ATP-dependent manner. In Treponema pallidum (strain Nichols), this protein is DNA gyrase subunit B.